Consider the following 157-residue polypeptide: Subgroup A Rous sarcoma virus receptor pg950 (157 aa).

A signal peptide spans 1–19; the sequence is MARLLPALLLLLLPGNVTG. N-linked (GlcNAc...) asparagine glycans are attached at residues asparagine 20 and asparagine 24. Topologically, residues 20–102 are extracellular; that stretch reads NGSGNGSLSR…RALPARNHGR (83 aa). The LDL-receptor class A domain maps to 28–71; it reads SRCPPGQFRCSEPPGAHGECYPQDWLCDGHPDCDDGRDEWGCGT. 3 cysteine pairs are disulfide-bonded: cysteine 30/cysteine 47, cysteine 37/cysteine 60, and cysteine 54/cysteine 69. Asparagine 81 carries N-linked (GlcNAc...) asparagine glycosylation. Residues 103 to 125 form a helical membrane-spanning segment; that stretch reads MWMLITAVLLCCLVAVGGIAAWG. Over 126–157 the chain is Cytoplasmic; the sequence is KSKAKSRSDIFSLASASKELLVPDKSQADLFS.

(Microbial infection) Interacts with Rous sarcoma virus envelope protein; this interaction allows the viral attachment.

The protein resides in the membrane. Functionally, responsible for susceptibility to the retrovirus subgroup A Rous sarcoma virus. The sequence is that of Subgroup A Rous sarcoma virus receptor pg950 from Coturnix japonica (Japanese quail).